The following is a 213-amino-acid chain: Large ribosomal subunit protein uL18c (213 aa).

Belongs to the universal ribosomal protein uL18 family.

The protein resides in the plastid. It localises to the apicoplast. This is Large ribosomal subunit protein uL18c (RPL18) from Plasmodium falciparum (isolate 3D7).